Reading from the N-terminus, the 283-residue chain is Protease HtpX homolog (283 aa).

The next 2 helical transmembrane spans lie at 7-27 (TAVL…VLGG) and 29-49 (QGMA…YWFS). His-131 lines the Zn(2+) pocket. Glu-132 is a catalytic residue. Position 135 (His-135) interacts with Zn(2+). A run of 2 helical transmembrane segments spans residues 146–166 (ISAT…FFGG) and 177–197 (IAGI…QMAI). Glu-202 is a Zn(2+) binding site.

This sequence belongs to the peptidase M48B family. The cofactor is Zn(2+).

Its subcellular location is the cell inner membrane. The sequence is that of Protease HtpX homolog from Methylibium petroleiphilum (strain ATCC BAA-1232 / LMG 22953 / PM1).